Here is a 258-residue protein sequence, read N- to C-terminus: Apolipoprotein E (258 aa).

An N-terminal signal peptide occupies residues 1–19; the sequence is MRVWTVLLGAVLLLAACQA. Repeat copies occupy residues 112–133, 134–155, and 156–173. Positions 112–173 are 3 X 22 AA approximate tandem repeats; it reads VDMEEAKTRV…KLEAYSKEAT (62 aa).

It belongs to the apolipoprotein A1/A4/E family. In terms of assembly, homotetramer.

The protein resides in the secreted. The protein localises to the extracellular space. It localises to the extracellular matrix. Its function is as follows. APOE is an apolipoprotein, a protein associating with lipid particles, that mainly functions in lipoprotein-mediated lipid transport between organs via the plasma and interstitial fluids. APOE is a core component of plasma lipoproteins and is involved in their production, conversion and clearance. Apolipoproteins are amphipathic molecules that interact both with lipids of the lipoprotein particle core and the aqueous environment of the plasma. This is Apolipoprotein E (APOE) from Alligator mississippiensis (American alligator).